The following is a 176-amino-acid chain: Ferritin, middle subunit (176 aa).

Residues 7–156 form the Ferritin-like diiron domain; the sequence is QNYHSDCEAA…DFITNLKRLG (150 aa). Fe cation contacts are provided by Glu24, Glu59, His62, Glu104, Gln138, and Asp141.

This sequence belongs to the ferritin family. In terms of assembly, oligomer of 24 subunits. The functional molecule is roughly spherical and contains a central cavity into which the polymeric mineral iron core is deposited.

The enzyme catalyses 4 Fe(2+) + O2 + 4 H(+) = 4 Fe(3+) + 2 H2O. Stores iron in a soluble, non-toxic, readily available form. Important for iron homeostasis. Has ferroxidase activity. Iron is taken up in the ferrous form and deposited as ferric hydroxides after oxidation. The chain is Ferritin, middle subunit from Aquarana catesbeiana (American bullfrog).